We begin with the raw amino-acid sequence, 335 residues long: Holliday junction branch migration complex subunit RuvB (335 aa).

Residues 4–184 (ADRIISSNAQ…FGIVQRLEFY (181 aa)) are large ATPase domain (RuvB-L). ATP is bound by residues I23, R24, G65, K68, T69, T70, 131–133 (EDY), R174, Y184, and R221. Mg(2+) is bound at residue T69. The segment at 185-255 (SVEDLTSIVA…IAKSALSMLD (71 aa)) is small ATPAse domain (RuvB-S). The head domain (RuvB-H) stretch occupies residues 258-335 (QAGFDYLDRK…RHFGLDKLTE (78 aa)). R294, R313, and R318 together coordinate DNA.

It belongs to the RuvB family. In terms of assembly, homohexamer. Forms an RuvA(8)-RuvB(12)-Holliday junction (HJ) complex. HJ DNA is sandwiched between 2 RuvA tetramers; dsDNA enters through RuvA and exits via RuvB. An RuvB hexamer assembles on each DNA strand where it exits the tetramer. Each RuvB hexamer is contacted by two RuvA subunits (via domain III) on 2 adjacent RuvB subunits; this complex drives branch migration. In the full resolvosome a probable DNA-RuvA(4)-RuvB(12)-RuvC(2) complex forms which resolves the HJ.

Its subcellular location is the cytoplasm. It carries out the reaction ATP + H2O = ADP + phosphate + H(+). In terms of biological role, the RuvA-RuvB-RuvC complex processes Holliday junction (HJ) DNA during genetic recombination and DNA repair, while the RuvA-RuvB complex plays an important role in the rescue of blocked DNA replication forks via replication fork reversal (RFR). RuvA specifically binds to HJ cruciform DNA, conferring on it an open structure. The RuvB hexamer acts as an ATP-dependent pump, pulling dsDNA into and through the RuvAB complex. RuvB forms 2 homohexamers on either side of HJ DNA bound by 1 or 2 RuvA tetramers; 4 subunits per hexamer contact DNA at a time. Coordinated motions by a converter formed by DNA-disengaged RuvB subunits stimulates ATP hydrolysis and nucleotide exchange. Immobilization of the converter enables RuvB to convert the ATP-contained energy into a lever motion, pulling 2 nucleotides of DNA out of the RuvA tetramer per ATP hydrolyzed, thus driving DNA branch migration. The RuvB motors rotate together with the DNA substrate, which together with the progressing nucleotide cycle form the mechanistic basis for DNA recombination by continuous HJ branch migration. Branch migration allows RuvC to scan DNA until it finds its consensus sequence, where it cleaves and resolves cruciform DNA. This chain is Holliday junction branch migration complex subunit RuvB, found in Mannheimia succiniciproducens (strain KCTC 0769BP / MBEL55E).